A 524-amino-acid chain; its full sequence is Cytochrome c nitrite reductase subunit NrfA (524 aa).

The first 24 residues, methionine 1–threonine 24, serve as a signal peptide directing secretion. Positions aspartate 29–tyrosine 39 are interaction with NrfH. Ca(2+)-binding residues include glycine 78, glutamate 117, and alanine 118. Histidine 121, cysteine 147, cysteine 150, lysine 151, cysteine 187, cysteine 190, and histidine 191 together coordinate heme. The tract at residues arginine 221–asparagine 222 is interaction with NrfH. Cysteine 229, cysteine 232, and histidine 233 together coordinate heme. The Ca(2+) site is built by glutamate 235, tyrosine 236, lysine 295, and glutamine 297. Residues histidine 309, cysteine 316, cysteine 319, histidine 320, histidine 335, cysteine 349, cysteine 352, histidine 353, and histidine 434 each coordinate heme. The segment at aspartate 318 to lysine 331 is interaction with NrfH. Residues glutamine 351–aspartate 355 are interaction with NrfH.

This sequence belongs to the cytochrome c-552 family. In terms of assembly, component of the NrfHA cytochrome c nitrite reductase complex composed of 4 NrfA catalytic subunits and 2 NrfH quinone-binding subunits. NrfA homodimer interacts with NrfH. Ca(2+) is required as a cofactor. It depends on heme as a cofactor.

It localises to the cell inner membrane. It catalyses the reaction 6 Fe(III)-[cytochrome c] + NH4(+) + 2 H2O = 6 Fe(II)-[cytochrome c] + nitrite + 8 H(+). Catalytic subunit of the cytochrome c nitrite reductase holocomplex NrfHA. Has both nitrite and sulfite reductase activities. Catalyzes the reduction of nitrite to ammonia, consuming six electrons acquired by the electron donor subunit NrfH from the menaquinone pool, in an anaerobic respiratory process of nitrite. The other biological function of the NrfHA holocomplex is to detoxify nitrite. This function is essential for the survival of this organism as it enables it to overcome inhibition by nitrite, which is produced by other organisms living in the same environment. This is Cytochrome c nitrite reductase subunit NrfA from Nitratidesulfovibrio vulgaris (strain ATCC 29579 / DSM 644 / CCUG 34227 / NCIMB 8303 / VKM B-1760 / Hildenborough) (Desulfovibrio vulgaris).